The following is a 257-amino-acid chain: Capsid protein (257 aa).

A Bipartite nuclear localization signal motif is present at residues 3–20 (KRTGDILISTPVSKVRRK). A Nuclear localization signal motif is present at residues 40–54 (KRRSWTYRPMYRKPR). Residues 68 to 85 (CEGPCKVQSYEQRDDVKH) fold into a zinc finger. The Nuclear export signal motif lies at 101-122 (ITHRVGKRFCIKSIYILGKIWM). The short motif at 201 to 248 (KRFFKVNTHVVYNHQEQAKYENHTENALLLYMACTHASNPVYATLKIR) is the Bipartite nuclear localization signal element.

Belongs to the geminiviridae capsid protein family. In terms of assembly, homomultimer. Binds to single-stranded and double-stranded viral DNA. Interacts (via nuclear localization signals) with host importin alpha-1a.

Its subcellular location is the virion. It is found in the host nucleus. Functionally, encapsidates the viral genome into characteristic twinned ('geminate') particles. Binds the genomic viral ssDNA and shuttles it into and out of the cell nucleus. Plays a role in protection of the genome from degradation, virus acquisition and transmission by insect vectors, infectivity, and systemic movement. The CP of monopartite geminiviruses is absolutely essential for virus movement. This is Capsid protein from Tomato yellow leaf curl Sardinia virus (isolate Spain-1) (TYLCSV).